The following is a 462-amino-acid chain: NAD-capped RNA hydrolase NUDT12 (462 aa).

Position 10 is an N6-succinyllysine (Lys10). 3 ANK repeats span residues 11–40, 45–74, and 78–98; these read EMIS…SLLN, NGWT…DRSL, and ARQT…ANLL. Lys185 carries the post-translational modification N6-succinyllysine. The Zn(2+) site is built by Cys284 and Cys287. Lys292 is modified (N6-succinyllysine). Zn(2+) is bound by residues Cys302 and Cys307. Substrate is bound by residues Tyr318, 354–356, Glu370, Glu374, and Glu415; that span reads AGF. The region spanning 319–453 is the Nudix hydrolase domain; the sequence is PRVDPVVIMQ…SRAIAHQLIK (135 aa). Residues Ala354, Glu370, Glu374, and Glu415 each coordinate Mg(2+). The Nudix box signature appears at 355-376; sequence GFIEPGETIEDAVRREVEEESG. Residues 460 to 462 carry the Microbody targeting signal motif; sequence PNL.

It belongs to the Nudix hydrolase family. NudC subfamily. In terms of assembly, homodimer. Homodimerization is essential for its catalytic activity and protein stability. Interacts (via ANK repeats) with BLMH. The cofactor is Mg(2+). Zn(2+) is required as a cofactor. As to expression, expressed abundantly in the liver and kidney.

It is found in the cytoplasm. It localises to the peroxisome. The protein resides in the cytoplasmic granule. It catalyses the reaction a 5'-end NAD(+)-phospho-ribonucleoside in mRNA + H2O = a 5'-end phospho-adenosine-phospho-ribonucleoside in mRNA + beta-nicotinamide D-ribonucleotide + 2 H(+). The catalysed reaction is NAD(+) + H2O = beta-nicotinamide D-ribonucleotide + AMP + 2 H(+). It carries out the reaction NADH + H2O = reduced beta-nicotinamide D-ribonucleotide + AMP + 2 H(+). The enzyme catalyses NADPH + H2O = reduced beta-nicotinamide D-ribonucleotide + adenosine 2',5'-bisphosphate + 2 H(+). Functionally, mRNA decapping enzyme that specifically removes the nicotinamide adenine dinucleotide (NAD) cap from a subset of mRNAs by hydrolyzing the diphosphate linkage to produce nicotinamide mononucleotide (NMN) and 5' monophosphate mRNA. The NAD-cap is present at the 5'-end of some RNAs; in contrast to the canonical N7 methylguanosine (m7G) cap, the NAD cap promotes mRNA decay. Preferentially acts on NAD-capped transcripts in response to nutrient stress. Also acts on free nicotinamide adenine dinucleotide molecules: hydrolyzes NAD(H) into NMN(H) and AMP, and NADPH into NMNH and 2',5'-ADP. May act to regulate the concentration of peroxisomal nicotinamide nucleotide cofactors required for oxidative metabolism in this organelle. Regulates the levels of circadian clock components PER1, PER2, PER3 and CRY2 in the liver. This chain is NAD-capped RNA hydrolase NUDT12, found in Mus musculus (Mouse).